Reading from the N-terminus, the 1196-residue chain is Major DNA-binding protein (1196 aa).

A zinc finger spans residues 499 to 512 (CNLCTFDTRHACVH). 2 short sequence motifs (required for filament formation) span residues 843–844 (FW) and 1142–1144 (FNF). The tract at residues 1158–1196 (GGPGAPGPAFAGRKRAFHGDDPFGEGPPDKKGDLTLDML) is disordered. The segment at 1170–1196 (RKRAFHGDDPFGEGPPDKKGDLTLDML) is required for nuclear localization. Residues 1174-1196 (FHGDDPFGEGPPDKKGDLTLDML) are compositionally biased toward basic and acidic residues.

The protein belongs to the herpesviridae major DNA-binding protein family. As to quaternary structure, homooligomers. Forms double-helical filaments necessary for the formation of replication compartments within the host nucleus. Interacts with the origin-binding protein. Interacts with the helicase primase complex; this interaction stimulates primer synthesis activity of the helicase-primase complex. Interacts with the DNA polymerase. Interacts with the alkaline exonuclease; this interaction increases its nuclease processivity.

Its subcellular location is the host nucleus. In terms of biological role, plays several crucial roles in viral infection. Participates in the opening of the viral DNA origin to initiate replication by interacting with the origin-binding protein. May disrupt loops, hairpins and other secondary structures present on ssDNA to reduce and eliminate pausing of viral DNA polymerase at specific sites during elongation. Promotes viral DNA recombination by performing strand-transfer, characterized by the ability to transfer a DNA strand from a linear duplex to a complementary single-stranded DNA circle. Can also catalyze the renaturation of complementary single strands. Additionally, reorganizes the host cell nucleus, leading to the formation of prereplicative sites and replication compartments. This process is driven by the protein which can form double-helical filaments in the absence of DNA. The sequence is that of Major DNA-binding protein from Human herpesvirus 1 (strain KOS) (HHV-1).